Here is a 345-residue protein sequence, read N- to C-terminus: 4-hydroxyproline 2-epimerase (345 aa).

Gln85 is a binding site for substrate. The Proton acceptor role is filled by Ser93. Substrate contacts are provided by residues Gly94–Ser95 and Asp251. Cys255 acts as the Proton donor in catalysis. Gly256–Thr257 contributes to the substrate binding site.

The protein belongs to the proline racemase family.

The catalysed reaction is trans-4-hydroxy-L-proline = cis-4-hydroxy-D-proline. In terms of biological role, catalyzes the epimerization of trans-4-hydroxy-L-proline (t4LHyp) to cis-4-hydroxy-D-proline (c4DHyp). May be involved in a degradation pathway of t4LHyp. Can also catalyze the epimerization of trans-3-hydroxy-L-proline (t3LHyp) to cis-3-hydroxy-D-proline (c3DHyp) in vitro, albeit with 2-fold lower efficiency. Displays no proline racemase activity. The polypeptide is 4-hydroxyproline 2-epimerase (Rhizobium etli (strain ATCC 51251 / DSM 11541 / JCM 21823 / NBRC 15573 / CFN 42)).